A 332-amino-acid polypeptide reads, in one-letter code: Casein kinase II subunit alpha (332 aa).

The 285-residue stretch at 43–327 (YEIIRKVGRG…TCQEAMAHPY (285 aa)) folds into the Protein kinase domain. ATP is bound by residues 49–57 (VGRGKYSEV) and Lys-72. Asp-160 functions as the Proton acceptor in the catalytic mechanism.

This sequence belongs to the protein kinase superfamily. Ser/Thr protein kinase family. CK2 subfamily. Tetramer composed of two alpha chains, one beta chain and one beta' chain.

The catalysed reaction is L-seryl-[protein] + ATP = O-phospho-L-seryl-[protein] + ADP + H(+). It carries out the reaction L-threonyl-[protein] + ATP = O-phospho-L-threonyl-[protein] + ADP + H(+). Functionally, catalytic subunit of a constitutively active serine/threonine-protein kinase complex that phosphorylates a large number of substrates containing acidic residues C-terminal to the phosphorylated serine or threonine. The chain is Casein kinase II subunit alpha from Schizosaccharomyces pombe (strain 972 / ATCC 24843) (Fission yeast).